The following is a 454-amino-acid chain: 3-phosphoshikimate 1-carboxyvinyltransferase (454 aa).

Lys-39, Ser-40, and Arg-44 together coordinate 3-phosphoshikimate. Lys-39 lines the phosphoenolpyruvate pocket. Residues Gly-112 and Arg-140 each coordinate phosphoenolpyruvate. The 3-phosphoshikimate site is built by Ser-185, Gln-187, Asp-333, and Lys-360. Residue Gln-187 coordinates phosphoenolpyruvate. The active-site Proton acceptor is the Asp-333. Residues Arg-364 and Arg-405 each coordinate phosphoenolpyruvate.

This sequence belongs to the EPSP synthase family. As to quaternary structure, monomer.

The protein localises to the cytoplasm. The catalysed reaction is 3-phosphoshikimate + phosphoenolpyruvate = 5-O-(1-carboxyvinyl)-3-phosphoshikimate + phosphate. Its pathway is metabolic intermediate biosynthesis; chorismate biosynthesis; chorismate from D-erythrose 4-phosphate and phosphoenolpyruvate: step 6/7. In terms of biological role, catalyzes the transfer of the enolpyruvyl moiety of phosphoenolpyruvate (PEP) to the 5-hydroxyl of shikimate-3-phosphate (S3P) to produce enolpyruvyl shikimate-3-phosphate and inorganic phosphate. This chain is 3-phosphoshikimate 1-carboxyvinyltransferase, found in Xylella fastidiosa (strain Temecula1 / ATCC 700964).